The chain runs to 423 residues: Putative serpin-Z12 (423 aa).

The tract at residues 1 to 25 is disordered; it reads MAALAAGEPFSGRATGGDGGVRSDV. The RCL stretch occupies residues 370–394; sequence GTVAAASTAVVMMQKGSSLPPVDFV.

Belongs to the serpin family.

In terms of biological role, probable serine protease inhibitor. This is Putative serpin-Z12 from Oryza sativa subsp. japonica (Rice).